A 98-amino-acid polypeptide reads, in one-letter code: NADH-ubiquinone oxidoreductase chain 4L (98 aa).

The next 3 helical transmembrane spans lie at 1 to 21 (MTTMFFNLLLAFMVALMGVYI), 29 to 49 (TLLCLEGMMLSIFIMVSLTLL), and 59 to 79 (FPLILLVFSACEAGVGLALLV).

The protein belongs to the complex I subunit 4L family. As to quaternary structure, core subunit of respiratory chain NADH dehydrogenase (Complex I) which is composed of 45 different subunits.

The protein localises to the mitochondrion inner membrane. The catalysed reaction is a ubiquinone + NADH + 5 H(+)(in) = a ubiquinol + NAD(+) + 4 H(+)(out). In terms of biological role, core subunit of the mitochondrial membrane respiratory chain NADH dehydrogenase (Complex I) which catalyzes electron transfer from NADH through the respiratory chain, using ubiquinone as an electron acceptor. Part of the enzyme membrane arm which is embedded in the lipid bilayer and involved in proton translocation. This is NADH-ubiquinone oxidoreductase chain 4L (MT-ND4L) from Zaglossus bruijni (Western long-beaked echidna).